The primary structure comprises 459 residues: Bifunctional protein GlmU (459 aa).

Positions Met-1–Arg-230 are pyrophosphorylase. UDP-N-acetyl-alpha-D-glucosamine-binding positions include Leu-9–Gly-12, Lys-23, Gln-73, Gly-78–Thr-79, Ser-101–Asp-103, Gly-140, Glu-155, Asn-170, and Asn-228. Asp-103 is a Mg(2+) binding site. Mg(2+) is bound at residue Asn-228. The interval Val-231–Asp-251 is linker. The segment at Gly-252–Asp-459 is N-acetyltransferase. Residues Arg-333 and Lys-351 each contribute to the UDP-N-acetyl-alpha-D-glucosamine site. His-363 acts as the Proton acceptor in catalysis. Residues Tyr-366 and Asn-377 each coordinate UDP-N-acetyl-alpha-D-glucosamine. Acetyl-CoA contacts are provided by residues Asn-386–Tyr-387, Ser-405, Ala-423, and Arg-440.

This sequence in the N-terminal section; belongs to the N-acetylglucosamine-1-phosphate uridyltransferase family. It in the C-terminal section; belongs to the transferase hexapeptide repeat family. Homotrimer. Mg(2+) is required as a cofactor.

It localises to the cytoplasm. It catalyses the reaction alpha-D-glucosamine 1-phosphate + acetyl-CoA = N-acetyl-alpha-D-glucosamine 1-phosphate + CoA + H(+). The enzyme catalyses N-acetyl-alpha-D-glucosamine 1-phosphate + UTP + H(+) = UDP-N-acetyl-alpha-D-glucosamine + diphosphate. It functions in the pathway nucleotide-sugar biosynthesis; UDP-N-acetyl-alpha-D-glucosamine biosynthesis; N-acetyl-alpha-D-glucosamine 1-phosphate from alpha-D-glucosamine 6-phosphate (route II): step 2/2. The protein operates within nucleotide-sugar biosynthesis; UDP-N-acetyl-alpha-D-glucosamine biosynthesis; UDP-N-acetyl-alpha-D-glucosamine from N-acetyl-alpha-D-glucosamine 1-phosphate: step 1/1. It participates in bacterial outer membrane biogenesis; LPS lipid A biosynthesis. Its function is as follows. Catalyzes the last two sequential reactions in the de novo biosynthetic pathway for UDP-N-acetylglucosamine (UDP-GlcNAc). The C-terminal domain catalyzes the transfer of acetyl group from acetyl coenzyme A to glucosamine-1-phosphate (GlcN-1-P) to produce N-acetylglucosamine-1-phosphate (GlcNAc-1-P), which is converted into UDP-GlcNAc by the transfer of uridine 5-monophosphate (from uridine 5-triphosphate), a reaction catalyzed by the N-terminal domain. The polypeptide is Bifunctional protein GlmU (Levilactobacillus brevis (strain ATCC 367 / BCRC 12310 / CIP 105137 / JCM 1170 / LMG 11437 / NCIMB 947 / NCTC 947) (Lactobacillus brevis)).